The chain runs to 596 residues: MSVKPTLSKPIGGQDASSPAVVMRRLWPYVKPLVWVLVAGVLAMAAVAATEAGIPALLKPLLDHGFGSKGDMTTKLYVPAAVVGLALARAIAQYASGYLLQYVSNRILLDLRIQMFERMIHTGVSFFQRETASTVINAVVFEVNQVLSVLMGVMITLVRDSLTVVFLLGYLFYLNWRLTLIVAILLPCIGWLVGKINRRLRRLNREHQTLTNQLAYIVEETVGGYKVVKVHNGESYEIGRFNELSRKLRGYSMRMTVSGGLAQPLTQFLASIALAVVLTIAVVQSSNDQTTVGGFVAFVTAMLLIISPLKHLMDVNQPLQRGMTAAELIFGLIDEPREPEGGGKPLARASGAIEFSHVSFSYGISRDGRQTLDDVSFTVAPGEMVALAGPSGSGKTTLVNLLPRFFDPSSGTVRVDGVALPEYSLHDLRNQIAMVSQDVVLFNDTIAANVAYGQTPERDGVEAALRAANLWETVTAMPDGIDTLVGDNGMRLSGGQRQRLAIARAIYKDAPILILDEATSALDSESERHVQAALETLMKGRTTLVIAHRLSTIERADRILVLEGGKIVESGSHRELLEQGGLYAHLHRIQFQQDAG.

6 helical membrane-spanning segments follow: residues V34–I54, A80–L100, A138–V158, V164–I184, Q263–V283, and V292–L312. The 284-residue stretch at V38–R321 folds into the ABC transmembrane type-1 domain. Residues I353 to I589 form the ABC transporter domain. An ATP-binding site is contributed by G389–T396.

It belongs to the ABC transporter superfamily. Lipid exporter (TC 3.A.1.106) family. As to quaternary structure, homodimer.

The protein localises to the cell inner membrane. The catalysed reaction is ATP + H2O + lipid A-core oligosaccharideSide 1 = ADP + phosphate + lipid A-core oligosaccharideSide 2.. Involved in lipopolysaccharide (LPS) biosynthesis. Translocates lipid A-core from the inner to the outer leaflet of the inner membrane. Transmembrane domains (TMD) form a pore in the inner membrane and the ATP-binding domain (NBD) is responsible for energy generation. The protein is ATP-dependent lipid A-core flippase of Burkholderia thailandensis (strain ATCC 700388 / DSM 13276 / CCUG 48851 / CIP 106301 / E264).